Consider the following 197-residue polypeptide: Protein RESISTANCE TO PHYTOPHTHORA 1, chloroplastic (197 aa).

A chloroplast-targeting transit peptide spans 1–52 (MSWSLCSTHGVSSSIALTYGFRHRRRSTFRIFATSDGLEPKDDPPESPLPSS). The disordered stretch occupies residues 35–56 (SDGLEPKDDPPESPLPSSSSAL). Transmembrane regions (helical) follow at residues 93-113 (FEVQ…NLLF), 120-140 (LWRL…LRAR), 150-170 (LNYL…FWKS), and 173-193 (LVWS…LGWL).

The protein resides in the plastid. It is found in the chloroplast. Its subcellular location is the membrane. Functionally, plays a positive role in the immune response to the oomycetes P.brassicae, including induced oxidative burst (e.g. H(2)O(2)) and enhanced expression of defense-related genes. This chain is Protein RESISTANCE TO PHYTOPHTHORA 1, chloroplastic, found in Arabidopsis thaliana (Mouse-ear cress).